The sequence spans 287 residues: Beta-lactamase GES-2 (287 aa).

The first 18 residues, 1-18, serve as a signal peptide directing secretion; sequence MRFIHALLLAGIAHSAYA. Cys-63 and Cys-233 form a disulfide bridge. Catalysis depends on Ser-64, which acts as the Nucleophile; acyl-ester intermediate. A beta-lactam is bound by residues Lys-67, Ser-125, and Glu-161.

It belongs to the class-A beta-lactamase family.

It catalyses the reaction a beta-lactam + H2O = a substituted beta-amino acid. Its activity is regulated as follows. Inhibited by the beta-lactamase-blocking agents clavulanic acid, sulbactam and tazobactam. Functionally, extended-spectrum beta-lactamase (ESBL) which confers resistance to penicillins, as well as first, third and fourth-generation cephalosporins. Has modest carbapenem-hydrolyzing activity. Has cefotaxime-hydrolyzing activity. The protein is Beta-lactamase GES-2 of Pseudomonas aeruginosa.